The sequence spans 148 residues: Lipoprotein MlpA (148 aa).

A signal peptide spans 1 to 17; that stretch reads MKIINILFCLFLLLLNS. Cys-18 carries N-palmitoyl cysteine lipidation. Cys-18 carries the S-diacylglycerol cysteine lipid modification. A disordered region spans residues 26–58; the sequence is LKNNAQQTKSRGKRDLTQKEATPEKPKSKEELL. Basic and acidic residues predominate over residues 38–58; that stretch reads KRDLTQKEATPEKPKSKEELL.

The protein belongs to the Multicopy lipoprotein (Mlp) family.

The protein localises to the cell outer membrane. Its function is as follows. An outer membrane protein that may participate in pathogenesis. Some human Lyme disease patients have antibodies against this protein. The Mlp proteins probably undergo intragenic recombination, generating new alleles. The protein is Lipoprotein MlpA (mlpA) of Borreliella burgdorferi (strain ATCC 35210 / DSM 4680 / CIP 102532 / B31) (Borrelia burgdorferi).